The chain runs to 748 residues: Acetyl-CoA decarbonylase/synthase complex subunit beta 1 (748 aa).

[Ni-Fe-S] cluster is bound by residues Cys-480, Cys-483, Cys-569, and Cys-571.

This sequence belongs to the CdhC family. Monomer. The ACDS complex is made up of alpha, epsilon, beta, gamma and delta chains with a probable stoichiometry of (alpha(2)epsilon(2))(4)-beta(8)-(gamma(1)delta(1))(8) (Potential). It depends on [Ni-Fe-S] cluster as a cofactor.

The catalysed reaction is Co(I)-[corrinoid Fe-S protein] + acetyl-CoA + H(+) = methyl-Co(III)-[corrinoid Fe-S protein] + CO + CoA. Part of a complex that catalyzes the reversible cleavage of acetyl-CoA, allowing autotrophic growth from CO(2). The alpha-epsilon complex generates CO from CO(2), while the beta subunit (this protein) combines the CO with CoA and a methyl group to form acetyl-CoA. The methyl group, which is incorporated into acetyl-CoA, is transferred to the beta subunit by a corrinoid iron-sulfur protein (the gamma-delta complex). This chain is Acetyl-CoA decarbonylase/synthase complex subunit beta 1 (cdhC1), found in Methanocaldococcus jannaschii (strain ATCC 43067 / DSM 2661 / JAL-1 / JCM 10045 / NBRC 100440) (Methanococcus jannaschii).